Consider the following 1308-residue polypeptide: Transposon TX1 uncharacterized 149 kDa protein (1308 aa).

The Reverse transcriptase domain maps to 494 to 765 (EAFKKGELPL…KIIKYLGVYL (272 aa)).

In Xenopus laevis (African clawed frog), this protein is Transposon TX1 uncharacterized 149 kDa protein.